The following is a 123-amino-acid chain: Protein HesB, vegetative (123 aa).

This sequence belongs to the HesB/IscA family.

In terms of biological role, may be required for efficient nitrogen fixation. This is Protein HesB, vegetative (hesB2) from Trichormus variabilis (strain ATCC 29413 / PCC 7937) (Anabaena variabilis).